The primary structure comprises 148 residues: MTDKEQVVIYTDGACKGNPGRGGWGALLLYKGAERELWGGEPDTTNNRMELMAAIQALAALKRSCPIRLVTDSEYVMRGITEWLPNWKKRGWKTASKQPVKNADLWQALDEQVARHQVEWQWVRGHTGDPGNERADQLANRGVAELPR.

The RNase H type-1 domain occupies 3–144 (DKEQVVIYTD…ADQLANRGVA (142 aa)). Residues Asp12, Glu50, Asp72, and Asp136 each coordinate Mg(2+). The disordered stretch occupies residues 125–148 (GHTGDPGNERADQLANRGVAELPR).

It belongs to the RNase H family. As to quaternary structure, monomer. It depends on Mg(2+) as a cofactor.

It localises to the cytoplasm. It catalyses the reaction Endonucleolytic cleavage to 5'-phosphomonoester.. Functionally, endonuclease that specifically degrades the RNA of RNA-DNA hybrids. The chain is Ribonuclease H from Pseudomonas paraeruginosa (strain DSM 24068 / PA7) (Pseudomonas aeruginosa (strain PA7)).